Consider the following 78-residue polypeptide: RNA-binding protein Hfq (78 aa).

A Sm domain is found at 10 to 69 (DPFLNALRKEHVPVSIYLVNGIKLQGHIESFDQYVVLLRNTVTQMVYKHAISTVVPARAV).

This sequence belongs to the Hfq family. As to quaternary structure, homohexamer.

RNA chaperone that binds small regulatory RNA (sRNAs) and mRNAs to facilitate mRNA translational regulation in response to envelope stress, environmental stress and changes in metabolite concentrations. Also binds with high specificity to tRNAs. This is RNA-binding protein Hfq from Herminiimonas arsenicoxydans.